A 1014-amino-acid chain; its full sequence is Latrophilin-like protein 1 (1014 aa).

Residues 1-27 (MRRNKTTYSLLQTILVACLLTVTPTFA) form the signal peptide. Asn-4 is a glycosylation site (N-linked (GlcNAc...) asparagine). Residues 28-555 (SNKPTTDESG…IDQTLLTLLT (528 aa)) are Extracellular-facing. Residues 43–134 (ICDGEAAELS…KYLEVKYNCV (92 aa)) enclose the SUEL-type lectin domain. One can recognise a GAIN-B domain in the interval 359-542 (ESNVIVQPAI…AVLMDVRGHD (184 aa)). Asn-473 and Asn-518 each carry an N-linked (GlcNAc...) asparagine glycan. Cystine bridges form between Cys-497–Cys-524 and Cys-512–Cys-526. The interval 497–542 (CVWWNHHELKWKPSGCKLSYHNKTMTSCDCTHLTHFAVLMDVRGHD) is GPS. Residues 556-576 (YVGCIISIICLLLTFFAYLIF) form a helical membrane-spanning segment. Residues 577 to 584 (SRNGGDRV) lie on the Cytoplasmic side of the membrane. Residues 585 to 605 (FIHENLCLSLAIAEITFLAGI) form a helical membrane-spanning segment. The Extracellular portion of the chain corresponds to 606 to 613 (TRTEDSLQ). The helical transmembrane segment at 614-634 (CGIIAVALMYMFLSALTWMLL) threads the bilayer. Residues 635-653 (EGYHIHRMLTEVFPSDPRR) are Cytoplasmic-facing. The chain crosses the membrane as a helical span at residues 654–674 (FTYLLVGYIPPAIITLVAYLY). Residues 675 to 692 (NSDGFGTPDHCWLSTQNN) lie on the Extracellular side of the membrane. A helical transmembrane segment spans residues 693 to 713 (FIWFFAGPACFIFCANSLVLV). The Cytoplasmic segment spans residues 714–745 (KTLCTVYQHTSGGYLPCRHDVDSGRSIRNWVK). Residues 746-766 (GSLALASLLGVTWIFGLFWVE) traverse the membrane as a helical segment. Residues 767–770 (DSRS) are Extracellular-facing. The helical transmembrane segment at 771-791 (IVMAYVFTISNSLQGLFIFLF) threads the bilayer. Residues 792–1014 (HVVFAEKMRK…NKPSMYCQDL (223 aa)) are Cytoplasmic-facing. Disordered stretches follow at residues 814–833 (GSSNSSPNHKRHNVQRDLMS) and 932–994 (YQGW…EVTP). The segment covering 941-952 (PEFSPPPPPLST) has biased composition (pro residues). Low complexity predominate over residues 965 to 986 (SGRRPPSSKMSDDSAYSDGSSS).

This sequence belongs to the G-protein coupled receptor 2 family. LN-TM7 subfamily. In terms of assembly, monomer and homodimer. Post-translationally, autoproteolytically processed at the GPS region of the GAIN-B domain; this cleavage modulates receptor activity. In terms of tissue distribution, expressed in epidermal precursor cells and pharyngeal primordium. In adults expression is seen in pharyngeal muscle cells and nervous system, the nerve ring, the gonad, and the vulva.

The protein resides in the cell membrane. Its function is as follows. Has a role in the establishment of anterior-posterior polarity in tissues during embryogenesis. Required for the alignment of the mitotic spindles and division planes. May have a role in cell death events. Required for normal defection and oocyte fertilization. Involved in sperm function. Operates in pharyngeal pumping during feeding. This is Latrophilin-like protein 1 from Caenorhabditis elegans.